The sequence spans 122 residues: Large ribosomal subunit protein bL12 (122 aa).

This sequence belongs to the bacterial ribosomal protein bL12 family. In terms of assembly, homodimer. Part of the ribosomal stalk of the 50S ribosomal subunit. Forms a multimeric L10(L12)X complex, where L10 forms an elongated spine to which 2 to 4 L12 dimers bind in a sequential fashion. Binds GTP-bound translation factors.

Functionally, forms part of the ribosomal stalk which helps the ribosome interact with GTP-bound translation factors. Is thus essential for accurate translation. The protein is Large ribosomal subunit protein bL12 of Myxococcus xanthus (strain DK1622).